The following is a 130-amino-acid chain: UPF0212 protein TSIB_1358 (130 aa).

This sequence belongs to the UPF0212 family.

The protein is UPF0212 protein TSIB_1358 of Thermococcus sibiricus (strain DSM 12597 / MM 739).